We begin with the raw amino-acid sequence, 220 residues long: Inner kinetochore subunit fta3 (220 aa).

Belongs to the CENP-H/MCM16 family. As to quaternary structure, component of the inner kinetochore constitutive centromere-associated network (CCAN) (also known as central kinetochore Sim4 complex in fission yeast), which is composed of at least cnl2, cnp3, cnp20, fta1, fta2, fta3, fta4, fta6, fta7, mal2, mhf1, mhf2, mis6, mis15, mis17, sim4 and wip1.

It is found in the nucleus. The protein resides in the chromosome. Its subcellular location is the centromere. The protein localises to the kinetochore. Functionally, component of the kinetochore, a multiprotein complex that assembles on centromeric DNA and attaches chromosomes to spindle microtubules, mediating chromosome segregation and sister chromatid segregation during meiosis and mitosis. Component of the inner kinetochore constitutive centromere-associated network (CCAN), which serves as a structural platform for outer kinetochore assembly. Fta2, fta3 and fta4 associate with the central core (cnt) and inner repeat (inr) region of the centromere. The protein is Inner kinetochore subunit fta3 (fta3) of Schizosaccharomyces pombe (strain 972 / ATCC 24843) (Fission yeast).